Here is a 174-residue protein sequence, read N- to C-terminus: NADH-quinone oxidoreductase subunit C (174 aa).

It belongs to the complex I 30 kDa subunit family. As to quaternary structure, NDH-1 is composed of 14 different subunits. Subunits NuoB, C, D, E, F, and G constitute the peripheral sector of the complex.

It localises to the cell membrane. The catalysed reaction is a quinone + NADH + 5 H(+)(in) = a quinol + NAD(+) + 4 H(+)(out). Its function is as follows. NDH-1 shuttles electrons from NADH, via FMN and iron-sulfur (Fe-S) centers, to quinones in the respiratory chain. The immediate electron acceptor for the enzyme in this species is believed to be ubiquinone. Couples the redox reaction to proton translocation (for every two electrons transferred, four hydrogen ions are translocated across the cytoplasmic membrane), and thus conserves the redox energy in a proton gradient. This chain is NADH-quinone oxidoreductase subunit C, found in Roseiflexus castenholzii (strain DSM 13941 / HLO8).